Consider the following 583-residue polypeptide: Radixin (583 aa).

The FERM domain maps to 5-295; the sequence is INVRVTTMDA…GNHELYMRRR (291 aa). 60–63 lines the a 1,2-diacyl-sn-glycero-3-phospho-(1D-myo-inositol) pocket; sequence KLNK. Position 83 is an N6-succinyllysine (Lys-83). Residue Lys-278 coordinates a 1,2-diacyl-sn-glycero-3-phospho-(1D-myo-inositol). Disordered regions lie at residues 309 to 336, 374 to 407, and 460 to 526; these read AREEKHQKQLERAQLENEKKKREIAEKE, ELDQERKRAKEEAERLEKERQAAEEAKSALAKQA, and KEEL…RVKK. The segment covering 374 to 400 has biased composition (basic and acidic residues); sequence ELDQERKRAKEEAERLEKERQAAEEAK. Positions 469–480 are enriched in pro residues; that stretch reads APPPPPPPPVIP. Composition is skewed to basic and acidic residues over residues 483-492 and 506-525; these read ENEHDEHDEN and MNHRSEEERVTETQKNERVK. Thr-564 carries the post-translational modification Phosphothreonine; by ROCK2.

Interacts with CPNE1 (via VWFA domain) and CPNE4 (via VWFA domain). Binds NHERF1. Interacts with NHERF1, NHERF2, LAYN, MME/NEP and ICAM2. Interacts (via FERM domain) with SPN/CD43 cytoplasmic tail. Interacts with CD44. Interacts with CLIC5; may work together in a complex which also includes EZR and MYO6 to stabilize linkages between the plasma membrane and subjacent actin cytoskeleton at the base of stereocilia. Phosphorylated by tyrosine-protein kinases. Phosphorylation by ROCK2 suppresses the head-to-tail association of the N-terminal and C-terminal halves resulting in an opened conformation which is capable of actin and membrane-binding.

The protein resides in the cell membrane. It localises to the cytoplasm. The protein localises to the cytoskeleton. It is found in the cleavage furrow. Its subcellular location is the cell projection. The protein resides in the microvillus. It localises to the stereocilium. Its activity is regulated as follows. A head-to-tail association, of the N-terminal and C-terminal halves results in a closed conformation (inactive form) which is incapable of actin or membrane-binding. Its function is as follows. Probably plays a crucial role in the binding of the barbed end of actin filaments to the plasma membrane. The polypeptide is Radixin (RDX) (Bos taurus (Bovine)).